A 100-amino-acid chain; its full sequence is Glyceraldehyde-3-phosphate dehydrogenase, testis-specific (100 aa).

Positions 39 and 64 each coordinate NAD(+). Arginine 89 contributes to the D-glyceraldehyde 3-phosphate binding site.

This sequence belongs to the glyceraldehyde-3-phosphate dehydrogenase family. Homotetramer.

Its subcellular location is the cytoplasm. It catalyses the reaction D-glyceraldehyde 3-phosphate + phosphate + NAD(+) = (2R)-3-phospho-glyceroyl phosphate + NADH + H(+). It participates in carbohydrate degradation; glycolysis; pyruvate from D-glyceraldehyde 3-phosphate: step 1/5. May play an important role in regulating the switch between different pathways for energy production during spermiogenesis and in the spermatozoon. Required for sperm motility and male fertility. The sequence is that of Glyceraldehyde-3-phosphate dehydrogenase, testis-specific from Mesocricetus auratus (Golden hamster).